A 177-amino-acid chain; its full sequence is Cytidylate kinase (177 aa).

7-15 contacts ATP; the sequence is GSPGSGTTT.

This sequence belongs to the cytidylate kinase family. Type 2 subfamily.

Its subcellular location is the cytoplasm. The catalysed reaction is CMP + ATP = CDP + ADP. It catalyses the reaction dCMP + ATP = dCDP + ADP. The chain is Cytidylate kinase from Methanocorpusculum labreanum (strain ATCC 43576 / DSM 4855 / Z).